A 473-amino-acid polypeptide reads, in one-letter code: 3-isopropylmalate dehydratase large subunit (473 aa).

The [4Fe-4S] cluster site is built by C355, C415, and C418. The tract at residues 423–452 (PDQLAPGERSASTSNRNFEGRQGKGGRTHL) is disordered.

It belongs to the aconitase/IPM isomerase family. LeuC type 1 subfamily. In terms of assembly, heterodimer of LeuC and LeuD. [4Fe-4S] cluster is required as a cofactor.

It catalyses the reaction (2R,3S)-3-isopropylmalate = (2S)-2-isopropylmalate. It participates in amino-acid biosynthesis; L-leucine biosynthesis; L-leucine from 3-methyl-2-oxobutanoate: step 2/4. In terms of biological role, catalyzes the isomerization between 2-isopropylmalate and 3-isopropylmalate, via the formation of 2-isopropylmaleate. The polypeptide is 3-isopropylmalate dehydratase large subunit (Corynebacterium jeikeium (strain K411)).